A 509-amino-acid polypeptide reads, in one-letter code: Bifunctional purine biosynthesis protein PurH (509 aa).

Positions 1–145 (MIKRALISVF…KSFKDVVVIS (145 aa)) constitute an MGS-like domain.

This sequence belongs to the PurH family.

The enzyme catalyses (6R)-10-formyltetrahydrofolate + 5-amino-1-(5-phospho-beta-D-ribosyl)imidazole-4-carboxamide = 5-formamido-1-(5-phospho-D-ribosyl)imidazole-4-carboxamide + (6S)-5,6,7,8-tetrahydrofolate. It carries out the reaction IMP + H2O = 5-formamido-1-(5-phospho-D-ribosyl)imidazole-4-carboxamide. It participates in purine metabolism; IMP biosynthesis via de novo pathway; 5-formamido-1-(5-phospho-D-ribosyl)imidazole-4-carboxamide from 5-amino-1-(5-phospho-D-ribosyl)imidazole-4-carboxamide (10-formyl THF route): step 1/1. The protein operates within purine metabolism; IMP biosynthesis via de novo pathway; IMP from 5-formamido-1-(5-phospho-D-ribosyl)imidazole-4-carboxamide: step 1/1. The protein is Bifunctional purine biosynthesis protein PurH of Brachyspira hyodysenteriae (strain ATCC 49526 / WA1).